The following is a 339-amino-acid chain: Ketol-acid reductoisomerase (NADP(+)) (339 aa).

Positions 1-182 (MRVYYDRDAD…GGGRSGIIET (182 aa)) constitute a KARI N-terminal Rossmann domain. Residues 24 to 27 (YGSQ), Lys48, Ser51, Thr53, and 83 to 86 (DELQ) each bind NADP(+). Residue His108 is part of the active site. Residue Gly134 participates in NADP(+) binding. Residues 183 to 328 (NFKEECETDL…AKLRAMMPWI (146 aa)) enclose the KARI C-terminal knotted domain. Residues Asp191, Glu195, Glu227, and Glu231 each coordinate Mg(2+). A substrate-binding site is contributed by Ser252.

It belongs to the ketol-acid reductoisomerase family. Requires Mg(2+) as cofactor.

The enzyme catalyses (2R)-2,3-dihydroxy-3-methylbutanoate + NADP(+) = (2S)-2-acetolactate + NADPH + H(+). It catalyses the reaction (2R,3R)-2,3-dihydroxy-3-methylpentanoate + NADP(+) = (S)-2-ethyl-2-hydroxy-3-oxobutanoate + NADPH + H(+). Its pathway is amino-acid biosynthesis; L-isoleucine biosynthesis; L-isoleucine from 2-oxobutanoate: step 2/4. It functions in the pathway amino-acid biosynthesis; L-valine biosynthesis; L-valine from pyruvate: step 2/4. Involved in the biosynthesis of branched-chain amino acids (BCAA). Catalyzes an alkyl-migration followed by a ketol-acid reduction of (S)-2-acetolactate (S2AL) to yield (R)-2,3-dihydroxy-isovalerate. In the isomerase reaction, S2AL is rearranged via a Mg-dependent methyl migration to produce 3-hydroxy-3-methyl-2-ketobutyrate (HMKB). In the reductase reaction, this 2-ketoacid undergoes a metal-dependent reduction by NADPH to yield (R)-2,3-dihydroxy-isovalerate. This Rhizobium meliloti (strain 1021) (Ensifer meliloti) protein is Ketol-acid reductoisomerase (NADP(+)).